The chain runs to 749 residues: Serine/threonine-protein phosphatase 4 regulatory subunit 3 (749 aa).

In terms of assembly, regulatory subunit 3 (R3) of the histone H2A phosphatase complex (HTP-C) consisting of PPH3, PSY2 and PSY4.

Its subcellular location is the nucleus. Its function is as follows. Core regulatory subunit of the histone H2A phosphatase complex, which dephosphorylates H2AS128ph (gamma-H2A) that has been displaced from sites of DNA lesions in the double-stranded DNA break repair process. Dephosphorylation is necessary for efficient recovery from the DNA damage checkpoint. The chain is Serine/threonine-protein phosphatase 4 regulatory subunit 3 (PSY2) from Kluyveromyces lactis (strain ATCC 8585 / CBS 2359 / DSM 70799 / NBRC 1267 / NRRL Y-1140 / WM37) (Yeast).